The following is a 766-amino-acid chain: Nucleolar complex protein 2 (766 aa).

Basic residues predominate over residues 1-12 (MKLATKKIKTLG). Disordered regions lie at residues 1 to 73 (MKLA…EELE), 100 to 154 (DTDD…DEED), and 674 to 766 (KTGV…LNEW). The span at 14–29 (SKPDLSKKKPAKDAIR) shows a compositional bias: basic and acidic residues. A compositionally biased stretch (polar residues) spans 33 to 42 (PQTTSETKVT). Basic residues predominate over residues 58–67 (KTTKKGFKKS). Acidic residues predominate over residues 100-115 (DTDDDDDEEGDEEDKE). Thr101 is subject to Phosphothreonine. The segment covering 130-140 (EKYHKPSKDLE) has biased composition (basic and acidic residues). Acidic residues predominate over residues 141–154 (VASDESDFEVDEED). Phosphoserine is present on residues Ser143, Ser146, Ser691, Ser693, and Ser705. Residues 706–720 (DDDDDEDVQEEEEVE) are compositionally biased toward acidic residues. The segment covering 757–766 (IVKDLDLNEW) has biased composition (basic and acidic residues).

This sequence belongs to the NOC2 family.

The protein resides in the nucleus. The protein is Nucleolar complex protein 2 of Drosophila melanogaster (Fruit fly).